The following is a 227-amino-acid chain: Probable FKBP-type 25 kDa peptidyl-prolyl cis-trans isomerase (227 aa).

One can recognise a PPIase FKBP-type domain in the interval 144–227; sequence ATQVHVRYRG…VFEIDLLGFR (84 aa).

This sequence belongs to the FKBP-type PPIase family.

The catalysed reaction is [protein]-peptidylproline (omega=180) = [protein]-peptidylproline (omega=0). In terms of biological role, PPIases accelerate the folding of proteins. In Pseudomonas aeruginosa (strain ATCC 15692 / DSM 22644 / CIP 104116 / JCM 14847 / LMG 12228 / 1C / PRS 101 / PAO1), this protein is Probable FKBP-type 25 kDa peptidyl-prolyl cis-trans isomerase (fkl).